Consider the following 385-residue polypeptide: Succinate--CoA ligase [ADP-forming] subunit beta (385 aa).

An ATP-grasp domain is found at 9 to 241 (KELLRDFGIN…IDEEEPSELE (233 aa)). ATP is bound by residues Lys46, 53–55 (GRG), Glu99, Thr102, and Glu107. Mg(2+)-binding residues include Asn196 and Asp210. Substrate contacts are provided by residues Asn261 and 318-320 (GIV).

It belongs to the succinate/malate CoA ligase beta subunit family. In terms of assembly, heterotetramer of two alpha and two beta subunits. Mg(2+) serves as cofactor.

It carries out the reaction succinate + ATP + CoA = succinyl-CoA + ADP + phosphate. The catalysed reaction is GTP + succinate + CoA = succinyl-CoA + GDP + phosphate. The protein operates within carbohydrate metabolism; tricarboxylic acid cycle; succinate from succinyl-CoA (ligase route): step 1/1. Functionally, succinyl-CoA synthetase functions in the citric acid cycle (TCA), coupling the hydrolysis of succinyl-CoA to the synthesis of either ATP or GTP and thus represents the only step of substrate-level phosphorylation in the TCA. The beta subunit provides nucleotide specificity of the enzyme and binds the substrate succinate, while the binding sites for coenzyme A and phosphate are found in the alpha subunit. This Campylobacter fetus subsp. fetus (strain 82-40) protein is Succinate--CoA ligase [ADP-forming] subunit beta.